The sequence spans 750 residues: Photosystem I P700 chlorophyll a apoprotein A1 (750 aa).

Helical transmembrane passes span 70–93 (VFSAHFGQLSIIFLWLSGMYFHGA), 156–179 (LYCTAIGALVFSALMLFAGWFHYH), 195–219 (LNHHLAGLLGLGSLSWAGHQVHVSL), 291–309 (IAHHHLAIAILFLIAGHMY), 346–369 (WHAQLSLNLAMLGSLTIVVAHHMY), 385–411 (LSLFTHHMWIGGFLIVGAAAHAAIFMV), 433–455 (AIISHLNWVCIFLGFHSFGLYIH), and 531–549 (FLVHHIHAFTIHVTVLILL). [4Fe-4S] cluster is bound by residues cysteine 573 and cysteine 582. 2 helical membrane passes run 589 to 610 (HVFLGLFWMYNAISVVIFHFSW) and 664 to 686 (LSAYGLFFLGAHFVWAFSLMFLF). Histidine 675 contributes to the chlorophyll a' binding site. Chlorophyll a contacts are provided by methionine 683 and tyrosine 691. Tryptophan 692 is a binding site for phylloquinone. A helical transmembrane segment spans residues 724–744 (AVGVTHYLLGGIATTWAFFLA).

It belongs to the PsaA/PsaB family. In terms of assembly, the PsaA/B heterodimer binds the P700 chlorophyll special pair and subsequent electron acceptors. PSI consists of a core antenna complex that captures photons, and an electron transfer chain that converts photonic excitation into a charge separation. The eukaryotic PSI reaction center is composed of at least 11 subunits. P700 is a chlorophyll a/chlorophyll a' dimer, A0 is one or more chlorophyll a, A1 is one or both phylloquinones and FX is a shared 4Fe-4S iron-sulfur center. is required as a cofactor.

It localises to the plastid. It is found in the chloroplast thylakoid membrane. It catalyses the reaction reduced [plastocyanin] + hnu + oxidized [2Fe-2S]-[ferredoxin] = oxidized [plastocyanin] + reduced [2Fe-2S]-[ferredoxin]. Functionally, psaA and PsaB bind P700, the primary electron donor of photosystem I (PSI), as well as the electron acceptors A0, A1 and FX. PSI is a plastocyanin-ferredoxin oxidoreductase, converting photonic excitation into a charge separation, which transfers an electron from the donor P700 chlorophyll pair to the spectroscopically characterized acceptors A0, A1, FX, FA and FB in turn. Oxidized P700 is reduced on the lumenal side of the thylakoid membrane by plastocyanin. The protein is Photosystem I P700 chlorophyll a apoprotein A1 of Lepidium virginicum (Virginia pepperweed).